Reading from the N-terminus, the 452-residue chain is Pup--protein ligase (452 aa).

Mg(2+) is bound at residue glutamate 9. Position 53 (arginine 53) interacts with ATP. A Mg(2+)-binding site is contributed by tyrosine 55. The active-site Proton acceptor is aspartate 57. Glutamate 63 serves as a coordination point for Mg(2+). Threonine 66 and tryptophan 419 together coordinate ATP.

This sequence belongs to the Pup ligase/Pup deamidase family. Pup-conjugating enzyme subfamily.

It catalyses the reaction ATP + [prokaryotic ubiquitin-like protein]-L-glutamate + [protein]-L-lysine = ADP + phosphate + N(6)-([prokaryotic ubiquitin-like protein]-gamma-L-glutamyl)-[protein]-L-lysine.. It functions in the pathway protein degradation; proteasomal Pup-dependent pathway. Its pathway is protein modification; protein pupylation. Catalyzes the covalent attachment of the prokaryotic ubiquitin-like protein modifier Pup to the proteasomal substrate proteins, thereby targeting them for proteasomal degradation. This tagging system is termed pupylation. The ligation reaction involves the side-chain carboxylate of the C-terminal glutamate of Pup and the side-chain amino group of a substrate lysine. The protein is Pup--protein ligase of Salinispora arenicola (strain CNS-205).